Reading from the N-terminus, the 83-residue chain is Small ribosomal subunit protein bS18 (83 aa).

A disordered region spans residues 1-23; sequence MKQRNNAKRVRLEQTRRPKKNPL.

This sequence belongs to the bacterial ribosomal protein bS18 family. Part of the 30S ribosomal subunit. Forms a tight heterodimer with protein bS6.

In terms of biological role, binds as a heterodimer with protein bS6 to the central domain of the 16S rRNA, where it helps stabilize the platform of the 30S subunit. This chain is Small ribosomal subunit protein bS18, found in Corynebacterium efficiens (strain DSM 44549 / YS-314 / AJ 12310 / JCM 11189 / NBRC 100395).